Reading from the N-terminus, the 294-residue chain is ATP synthase gamma chain (294 aa).

The protein belongs to the ATPase gamma chain family. F-type ATPases have 2 components, CF(1) - the catalytic core - and CF(0) - the membrane proton channel. CF(1) has five subunits: alpha(3), beta(3), gamma(1), delta(1), epsilon(1). CF(0) has three main subunits: a, b and c.

It is found in the cell inner membrane. In terms of biological role, produces ATP from ADP in the presence of a proton gradient across the membrane. The gamma chain is believed to be important in regulating ATPase activity and the flow of protons through the CF(0) complex. The protein is ATP synthase gamma chain of Nitrosomonas europaea (strain ATCC 19718 / CIP 103999 / KCTC 2705 / NBRC 14298).